The following is a 73-amino-acid chain: Large ribosomal subunit protein bL28 (73 aa).

It belongs to the bacterial ribosomal protein bL28 family.

This is Large ribosomal subunit protein bL28 from Buchnera aphidicola subsp. Cinara cedri (strain Cc).